The primary structure comprises 231 residues: MSLHVSYVDKEMTDHARASQPGSAALAQGTQYSLLLKNQSAQPWTFYVYQKMPQPVANVFSLAWFCSPYQIRVGNQIKFTWELAYNFVWSDTGQLIPGVDFFASGVEDCSPSGRNTTTFSLSDGPGLTAPIKGDPAGSLVINDAGNVPNNRFSVGIGMSGTGTYVAQAGTNLLHTFTPTPSYWIAAGTNVTIGSVLSIDTITQTREAKFPSAVFNLVGVLQEDNTWDINPA.

In terms of biological role, may be involved in plant-microbe interaction. This is Protein RhiA (rhiA) from Rhizobium leguminosarum bv. viciae.